The primary structure comprises 142 residues: Cell wall-binding protein YqgA (142 aa).

Residues 1–28 (MKQGKFSVFLILLLMLTLVVAPKEKAEA) form the signal peptide.

As to quaternary structure, found in a complex with F(1)F(0) ATP synthase and SpoIIIJ and YqjG.

It localises to the secreted. The protein resides in the cell wall. This is Cell wall-binding protein YqgA (yqgA) from Bacillus subtilis (strain 168).